We begin with the raw amino-acid sequence, 389 residues long: Na(+)/H(+) antiporter NhaA (389 aa).

Transmembrane regions (helical) follow at residues 14 to 34, 59 to 79, 95 to 115, 124 to 144, 154 to 174, 177 to 197, 213 to 233, 257 to 277, 292 to 312, 328 to 348, and 363 to 383; these read AGGI…NSPL, LILW…GLEV, SLPT…YLLF, AGWA…MALL, VFLL…IALF, TDLS…LVGL, LILW…GVII, PWST…VYVG, IALG…YIAV, IAPV…IASL, and LGTL…LSKV.

Belongs to the NhaA Na(+)/H(+) (TC 2.A.33) antiporter family.

It is found in the cell inner membrane. The enzyme catalyses Na(+)(in) + 2 H(+)(out) = Na(+)(out) + 2 H(+)(in). In terms of biological role, na(+)/H(+) antiporter that extrudes sodium in exchange for external protons. The chain is Na(+)/H(+) antiporter NhaA from Shewanella baltica (strain OS155 / ATCC BAA-1091).